The sequence spans 236 residues: MATRSRGVNRRSLRRWVRRGLVVAAVLALIPTMLTFLYLPSFVHPVSTLMLKDLATFSGYDRRWVSIDDVAPVLAHSVIMSEDGQFCFHRGVDLGELRGVVDDALAGEATRGASTITMQTVKNLFLWSRPLGSVRKVVELPLAVFFDAVMSKRRIMEIYLNIAEWGPGIYGIEAAAQHHFGIPAKQLSRRQAALLAVTLPNPIARNPAKPGPGLRRLANLIERRAGRSGAYVGCLE.

Residues 20–40 (GLVVAAVLALIPTMLTFLYLP) traverse the membrane as a helical segment.

The protein belongs to the glycosyltransferase 51 family.

It localises to the cell inner membrane. The enzyme catalyses [GlcNAc-(1-&gt;4)-Mur2Ac(oyl-L-Ala-gamma-D-Glu-L-Lys-D-Ala-D-Ala)](n)-di-trans,octa-cis-undecaprenyl diphosphate + beta-D-GlcNAc-(1-&gt;4)-Mur2Ac(oyl-L-Ala-gamma-D-Glu-L-Lys-D-Ala-D-Ala)-di-trans,octa-cis-undecaprenyl diphosphate = [GlcNAc-(1-&gt;4)-Mur2Ac(oyl-L-Ala-gamma-D-Glu-L-Lys-D-Ala-D-Ala)](n+1)-di-trans,octa-cis-undecaprenyl diphosphate + di-trans,octa-cis-undecaprenyl diphosphate + H(+). It functions in the pathway cell wall biogenesis; peptidoglycan biosynthesis. Its function is as follows. Peptidoglycan polymerase that catalyzes glycan chain elongation from lipid-linked precursors. In Mesorhizobium japonicum (strain LMG 29417 / CECT 9101 / MAFF 303099) (Mesorhizobium loti (strain MAFF 303099)), this protein is Biosynthetic peptidoglycan transglycosylase.